The sequence spans 710 residues: Solute carrier organic anion transporter family member 3A1 (710 aa).

Met1 carries the N-acetylmethionine modification. Residues 1 to 25 (MQAKKPGGSSGGGRSGELQGDEAQR) form a disordered region. The Cytoplasmic portion of the chain corresponds to 1 to 40 (MQAKKPGGSSGGGRSGELQGDEAQRNKKKKKKVSCFSNIK). A helical transmembrane segment spans residues 41–60 (IFLVSECALMLAQGTVGAYL). Topologically, residues 61 to 79 (VSVLTTLERRFNLQSADVG) are extracellular. A helical transmembrane segment spans residues 80 to 100 (VIASSFEIGNLALILFVSYFG). The Cytoplasmic portion of the chain corresponds to 101-106 (ARGHRP). A helical transmembrane segment spans residues 107 to 131 (RLIGCGGIVMALGALLSALPEFLTH). The Extracellular portion of the chain corresponds to 132-174 (QYKYEAGEIRWGAEGRDVCAANGSGGDQGPDPDLICRSRTATN). The N-linked (GlcNAc...) asparagine glycan is linked to Asn153. A helical membrane pass occupies residues 175 to 203 (MMYLLLIGAQVLLGIGATPVQPLGVSYID). At 204 to 222 (DHVRRKDSSLYIGILFTML) the chain is on the cytoplasmic side. Residues 223-243 (VFGPACGFILGSFCTKIYVDA) traverse the membrane as a helical segment. Topologically, residues 244–261 (VFIDTSNLDITPDDPRWI) are extracellular. Residues 262-286 (GAWWGGFLLCGALLFFSSVLMFGFP) traverse the membrane as a helical segment. At 287 to 344 (QSLPPHSDPALESEQAMLPEREYERPKPSNGVLRHPLEPDSSASCFQQLRVIPKVTKH) the chain is on the cytoplasmic side. The helical transmembrane segment at 345–366 (LLSNPVFTCIILAACMEIAVVA) threads the bilayer. Topologically, residues 367 to 386 (GFAAFLGKYLEQQFNLTTSS) are extracellular. N-linked (GlcNAc...) asparagine glycosylation occurs at Asn381. The helical transmembrane segment at 387–410 (ANQLLGMTAIPCACLGIFLGGLLV) threads the bilayer. The Cytoplasmic segment spans residues 411–414 (KKLS). Residues 415-438 (LSALGAIRMAMLVNLVSTACYVSF) form a helical membrane-spanning segment. Residues 439-539 (LFLGCDTGPV…PGCQEAFLTF (101 aa)) lie on the Extracellular side of the membrane. A glycan (N-linked (GlcNAc...) asparagine) is linked at Asn457. The 49-residue stretch at 465–513 (LDPYSSCNKNCECQTDSFTPVCGADGITYLSACFAGCNSTNLTGCACLM) folds into the Kazal-like domain. 3 cysteine pairs are disulfide-bonded: Cys471/Cys501, Cys477/Cys497, and Cys486/Cys511. N-linked (GlcNAc...) asparagine glycosylation is found at Asn502, Asn505, and Asn519. The helical transmembrane segment at 540-562 (LCVMCVCSMIGAMAQTPSVIILI) threads the bilayer. The Cytoplasmic segment spans residues 563 to 571 (RTVSPELKS). A helical transmembrane segment spans residues 572 to 597 (YALGVLFLLLRLLGFIPPPLIFGAGI). Residues 598-630 (DSTCLFWSTFCGEQGACALYDNVAYRYLYVSIA) lie on the Extracellular side of the membrane. Residues 631–648 (IALKSFAFLLYTTTWQCL) traverse the membrane as a helical segment. Residues 649-705 (RKNYKRYIKNHEGGLSTSEFFASTLTLDNLGRDPVPANQTHRTKFIYNLEDHEWCEN) lie on the Cytoplasmic side of the membrane.

This sequence belongs to the organo anion transporter (TC 2.A.60) family.

The protein resides in the basolateral cell membrane. It localises to the apical cell membrane. The protein localises to the basal cell membrane. It carries out the reaction L-thyroxine(out) = L-thyroxine(in). It catalyses the reaction prostaglandin E1(out) = prostaglandin E1(in). The catalysed reaction is prostaglandin E2(out) = prostaglandin E2(in). The enzyme catalyses prostaglandin F2alpha(out) = prostaglandin F2alpha(in). It carries out the reaction (5Z,8Z,11Z,14Z)-eicosatetraenoate(out) = (5Z,8Z,11Z,14Z)-eicosatetraenoate(in). It catalyses the reaction taurocholate(out) = taurocholate(in). The catalysed reaction is glycocholate(out) = glycocholate(in). The enzyme catalyses estrone 3-sulfate(out) = estrone 3-sulfate(in). It carries out the reaction argipressin(out) = argipressin(in). Functionally, putative organic anion antiporter with apparent broad substrate specificity. Recognizes various substrates including thyroid hormone L-thyroxine, prostanoids such as prostaglandin E1 and E2, bile acids such as taurocholate, glycolate and glycochenodeoxycholate and peptide hormones such as L-arginine vasopressin, likely operating in a tissue-specific manner. The transport mechanism, its electrogenicity and potential tissue-specific counterions remain to be elucidated. The polypeptide is Solute carrier organic anion transporter family member 3A1 (SLCO3A1) (Bos taurus (Bovine)).